The chain runs to 373 residues: Meiosis-specific kinetochore protein (373 aa).

Disordered stretches follow at residues 1 to 91 (MWPL…QDEK) and 250 to 276 (STPEKTKKKKTNSSTPGKKNRGLLTST). A compositionally biased stretch (basic and acidic residues) spans 77-91 (SLQENRSSEDTQDEK). The POLO box domain (PBD)-binding signature appears at 275 to 277 (STP). Positions 332-335 (EICC) are required for localization to kinetochores.

As to quaternary structure, interacts with CENPC. Interacts with PLK1; required for recruitment of PLK1 at kinetochores.

The protein localises to the chromosome. It localises to the centromere. The protein resides in the kinetochore. Key regulator of kinetochore function during meiosis I: required both for mono-orientation of kinetochores on sister chromosomes and protection of centromeric cohesin from separase-mediated cleavage. Acts by facilitating kinetochore mono-orientation during meiosis I, when kinetochores on sister chromosomes face the same direction and are thus captured and pulled by spindle fibers from the same pole. Also required to prevent cleavage of cohesin at centromeres during meiosis I, possibly by acting as a regulator of the shugoshin-dependent protection pathway. Acts in collaboration with PLK1: required for PLK1 enrichment to kinetochores. Not required during meiosis II or mitosis. This Homo sapiens (Human) protein is Meiosis-specific kinetochore protein.